Reading from the N-terminus, the 526-residue chain is MNKVLIFDRNMYPRGVKKNVLGRQRYGLKTIKRTLVHKPANKYVSRFTKQFHRRIIPIKQLDESKLDALSLRELEQLKLIIEEKQEEKRAQTHALTFFANLPTAPFGSSYTAEALGLRKYSGEARDPAHRIRDRFPRNHEKIYLEKEELMTTDLLLRYKNCLNSLNREQHQQILGDRVFSLTNSPSLAFSLAIIEEACIYYKYHFVHNLPIDPQDLFMYTITIMKFEYFNKLNMAKLCCVFNDNGHGDIEYRIFRQLCGKPVYDRDMPNTEYEVQQQTPGSFQYPAQQALSFIVTFARILRQIKERILQTKQPQFIRDFDQDRVSEQYQCGMISRLVGDQFNNHQCDDIGCQTRIQRMMSPWKPSLYFCTYLPKEFVEFGLHPNMPEEYNSFNVACSTTPSCSFASQQSKQTVQLNLQTKKQAKCKKLLTADKTNKGQKTNELRENRLKKDWSKEVDSIDFETNTTLQEDETRFVFIENDTSMKSAKIKENNGEENSDNEMELDLDYEDVETCETDINDTDSDDSD.

Residues Cys239, His344, Cys346, and Cys351 each coordinate Zn(2+). The segment at 239–351 (CVFNDNGHGD…NNHQCDDIGC (113 aa)) adopts a CHC2-type zinc-finger fold.

It belongs to the HHV-1 ICP27 protein family.

The protein localises to the virion tegument. It localises to the virion. It is found in the host nucleus. The protein resides in the host cytoplasm. Its function is as follows. Immediate early (EI) protein that plays many roles during productive infection including regulation of viral gene expression and nuclear export of intronless viral RNAs. The chain is mRNA export factor ICP27 homolog from Human herpesvirus 7 (strain JI) (HHV-7).